The primary structure comprises 407 residues: MLRWTTAGESHGQALIATVEHMPAGVPVTKDEVSYQLARRRLGYGRGARMKFEQDALTFLTGIRHGLTLGSPISIMIGNTEWDKWTTIMSSDALDMEDPDNVAAMSSGRGAKLTRPRPGHADYAGMLKYGFDDARNVLERSSARETAARVAAATVARSFLRETLGVEVLSHVISIGASEPYVGAEPTFADIQAIDDSPVRAFGKDAEKSMIAEIEAAKKAGDTLGGIVEVIVEGLPIGLGSHISGEDRLDAQIAAALMGIQAIKGVEIGDGFEEARRRGSEAHDEVFLDDNGVYRNTNRAGGLEGGMTNGETLRVRAGMKPISTVPRALKTIDMENGKAATGIHQRSDVCAVPAAGVVAEAMVTLVLARAVLQKFGGDSLSETKSNIDTYLKNIEERMKFEGLEDGA.

R40 and R46 together coordinate NADP(+). FMN is bound by residues 140-142 (RSS), 261-262 (QA), G305, 320-324 (KPIST), and R346.

Belongs to the chorismate synthase family. Homotetramer. FMNH2 is required as a cofactor.

It carries out the reaction 5-O-(1-carboxyvinyl)-3-phosphoshikimate = chorismate + phosphate. It participates in metabolic intermediate biosynthesis; chorismate biosynthesis; chorismate from D-erythrose 4-phosphate and phosphoenolpyruvate: step 7/7. Functionally, catalyzes the anti-1,4-elimination of the C-3 phosphate and the C-6 proR hydrogen from 5-enolpyruvylshikimate-3-phosphate (EPSP) to yield chorismate, which is the branch point compound that serves as the starting substrate for the three terminal pathways of aromatic amino acid biosynthesis. This reaction introduces a second double bond into the aromatic ring system. The protein is Chorismate synthase of Corynebacterium glutamicum (strain R).